Consider the following 653-residue polypeptide: Large subunit GTPase 1 homolog (653 aa).

Positions methionine 1–aspartate 31 are disordered. The segment covering leucine 16–arginine 28 has biased composition (basic residues). Residues serine 93 and serine 97 each carry the phosphoserine modification. The CP-type G domain occupies tryptophan 164 to proline 445. Asparagine 212 to aspartate 215 is a binding site for GTP. The disordered stretch occupies residues aspartate 251–histidine 358. Phosphoserine is present on serine 252. Residues lysine 258–alanine 288 are compositionally biased toward basic and acidic residues. A compositionally biased stretch (acidic residues) spans threonine 299–glycine 333. GTP contacts are provided by residues glycine 394–serine 401 and aspartate 438–glycine 441. A disordered region spans residues serine 630–leucine 653. Positions proline 637–lysine 647 are enriched in basic residues.

Belongs to the TRAFAC class YlqF/YawG GTPase family. LSG1 subfamily.

The protein resides in the cytoplasm. It is found in the endoplasmic reticulum. It localises to the nucleus. The protein localises to the cajal body. It carries out the reaction GTP + H2O = GDP + phosphate + H(+). Functionally, functions as a GTPase. May act by mediating the release of NMD3 from the 60S ribosomal subunit after export into the cytoplasm during the 60S ribosomal subunit maturation. The polypeptide is Large subunit GTPase 1 homolog (Macaca fascicularis (Crab-eating macaque)).